Here is a 507-residue protein sequence, read N- to C-terminus: MDFELKLLPLARICSEKCDALLVLIPQDLSAGGDDPLSALAALALKAGDLEAKPGKLLSAYRTPGIAATRVVLAGVGDASPRNVRTAVNAAMANLKNGNTQRVVVSLAAMNNAQPEIVRAAVVACSEAAYVYSTTKSKVSPVKLQRVVIGVNELSVARPGFDKALALVKGIEFAKEWANRPANHATPTLLAGAARELARLRNIKVEVLGPKEVAKLGMGSFMAVAQGTSEPLRFIVLRYEGAAKSVAPVVLIGKGITFDTGGISIKPAAEMDEMKFDMCGAASVLGTFRALAELQPALNVVGLIPASENMPGGRALKPGDVVTSMSGQTIEILNTDAEGRLVLCDALTYAERFKPRAVVDIATLTGACVIALGGVRSGLFSNNDELAQSLAAAGESSLDPCWRMPLDDDYAEGLKTNFADVANVAGRAGGAVTAAKFLHRFAGSFPWAHLDIAGTAWKGGAAKGATGRPVPLLLDYLLGQVTAAAPRKAQPKARSAKRSKPVSRTRA.

Residues lysine 254 and aspartate 259 each contribute to the Mn(2+) site. The active site involves lysine 266. 3 residues coordinate Mn(2+): aspartate 277, aspartate 336, and glutamate 338. Arginine 340 is a catalytic residue. The disordered stretch occupies residues proline 486 to alanine 507. Residues alanine 489–alanine 507 show a composition bias toward basic residues.

The protein belongs to the peptidase M17 family. It depends on Mn(2+) as a cofactor.

Its subcellular location is the cytoplasm. It catalyses the reaction Release of an N-terminal amino acid, Xaa-|-Yaa-, in which Xaa is preferably Leu, but may be other amino acids including Pro although not Arg or Lys, and Yaa may be Pro. Amino acid amides and methyl esters are also readily hydrolyzed, but rates on arylamides are exceedingly low.. It carries out the reaction Release of an N-terminal amino acid, preferentially leucine, but not glutamic or aspartic acids.. In terms of biological role, presumably involved in the processing and regular turnover of intracellular proteins. Catalyzes the removal of unsubstituted N-terminal amino acids from various peptides. The polypeptide is Probable cytosol aminopeptidase (Polaromonas sp. (strain JS666 / ATCC BAA-500)).